The chain runs to 620 residues: 1-deoxy-D-xylulose-5-phosphate synthase (620 aa).

Thiamine diphosphate contacts are provided by residues histidine 80 and 121–123; that span reads GHS. Aspartate 152 serves as a coordination point for Mg(2+). Residues 153–154, asparagine 181, tyrosine 288, and glutamate 370 contribute to the thiamine diphosphate site; that span reads GA. Position 181 (asparagine 181) interacts with Mg(2+).

Belongs to the transketolase family. DXPS subfamily. Homodimer. The cofactor is Mg(2+). Thiamine diphosphate is required as a cofactor.

It carries out the reaction D-glyceraldehyde 3-phosphate + pyruvate + H(+) = 1-deoxy-D-xylulose 5-phosphate + CO2. It functions in the pathway metabolic intermediate biosynthesis; 1-deoxy-D-xylulose 5-phosphate biosynthesis; 1-deoxy-D-xylulose 5-phosphate from D-glyceraldehyde 3-phosphate and pyruvate: step 1/1. Its function is as follows. Catalyzes the acyloin condensation reaction between C atoms 2 and 3 of pyruvate and glyceraldehyde 3-phosphate to yield 1-deoxy-D-xylulose-5-phosphate (DXP). The protein is 1-deoxy-D-xylulose-5-phosphate synthase of Salmonella paratyphi A (strain ATCC 9150 / SARB42).